Here is a 301-residue protein sequence, read N- to C-terminus: Ribosomal RNA small subunit methyltransferase A (301 aa).

S-adenosyl-L-methionine contacts are provided by Asn-23, Ile-25, Gly-50, Glu-72, Asp-97, and Asn-149.

Belongs to the class I-like SAM-binding methyltransferase superfamily. rRNA adenine N(6)-methyltransferase family. RsmA subfamily.

Its subcellular location is the cytoplasm. It catalyses the reaction adenosine(1518)/adenosine(1519) in 16S rRNA + 4 S-adenosyl-L-methionine = N(6)-dimethyladenosine(1518)/N(6)-dimethyladenosine(1519) in 16S rRNA + 4 S-adenosyl-L-homocysteine + 4 H(+). Its function is as follows. Specifically dimethylates two adjacent adenosines (A1518 and A1519) in the loop of a conserved hairpin near the 3'-end of 16S rRNA in the 30S particle. May play a critical role in biogenesis of 30S subunits. This Rickettsia conorii (strain ATCC VR-613 / Malish 7) protein is Ribosomal RNA small subunit methyltransferase A.